The chain runs to 396 residues: Elongation factor Tu (396 aa).

The tr-type G domain occupies 10 to 206 (KPHVNVGTIG…ALDSYIPEPE (197 aa)). Residues 19-26 (GHVDHGKT) form a G1 region. Position 19–26 (19–26 (GHVDHGKT)) interacts with GTP. Threonine 26 provides a ligand contact to Mg(2+). A G2 region spans residues 60 to 64 (GITIN). Residues 81–84 (DCPG) form a G3 region. GTP contacts are provided by residues 81-85 (DCPGH) and 136-139 (NKCD). Residues 136–139 (NKCD) form a G4 region. The interval 174 to 176 (SAL) is G5.

Belongs to the TRAFAC class translation factor GTPase superfamily. Classic translation factor GTPase family. EF-Tu/EF-1A subfamily. Monomer.

It localises to the cytoplasm. The catalysed reaction is GTP + H2O = GDP + phosphate + H(+). Its function is as follows. GTP hydrolase that promotes the GTP-dependent binding of aminoacyl-tRNA to the A-site of ribosomes during protein biosynthesis. In Acinetobacter baumannii (strain ATCC 17978 / DSM 105126 / CIP 53.77 / LMG 1025 / NCDC KC755 / 5377), this protein is Elongation factor Tu.